The primary structure comprises 354 residues: UDP-N-acetylglucosamine--N-acetylmuramyl-(pentapeptide) pyrophosphoryl-undecaprenol N-acetylglucosamine transferase 3 (354 aa).

Residues 12–14 (TAG), Arg-163, Ser-193, and Gln-287 each bind UDP-N-acetyl-alpha-D-glucosamine.

This sequence belongs to the glycosyltransferase 28 family. MurG subfamily.

It is found in the cell membrane. The catalysed reaction is di-trans,octa-cis-undecaprenyl diphospho-N-acetyl-alpha-D-muramoyl-L-alanyl-D-glutamyl-meso-2,6-diaminopimeloyl-D-alanyl-D-alanine + UDP-N-acetyl-alpha-D-glucosamine = di-trans,octa-cis-undecaprenyl diphospho-[N-acetyl-alpha-D-glucosaminyl-(1-&gt;4)]-N-acetyl-alpha-D-muramoyl-L-alanyl-D-glutamyl-meso-2,6-diaminopimeloyl-D-alanyl-D-alanine + UDP + H(+). It functions in the pathway cell wall biogenesis; peptidoglycan biosynthesis. Functionally, cell wall formation. Catalyzes the transfer of a GlcNAc subunit on undecaprenyl-pyrophosphoryl-MurNAc-pentapeptide (lipid intermediate I) to form undecaprenyl-pyrophosphoryl-MurNAc-(pentapeptide)GlcNAc (lipid intermediate II). The protein is UDP-N-acetylglucosamine--N-acetylmuramyl-(pentapeptide) pyrophosphoryl-undecaprenol N-acetylglucosamine transferase 3 of Bacillus cereus (strain ATCC 14579 / DSM 31 / CCUG 7414 / JCM 2152 / NBRC 15305 / NCIMB 9373 / NCTC 2599 / NRRL B-3711).